Here is a 257-residue protein sequence, read N- to C-terminus: Probable enoyl-CoA hydratase (257 aa).

It belongs to the enoyl-CoA hydratase/isomerase family.

It catalyses the reaction a (3S)-3-hydroxyacyl-CoA = a (2E)-enoyl-CoA + H2O. It carries out the reaction a 4-saturated-(3S)-3-hydroxyacyl-CoA = a (3E)-enoyl-CoA + H2O. Functionally, could possibly oxidize fatty acids using specific components. The polypeptide is Probable enoyl-CoA hydratase (fadB1) (Rhizobium meliloti (strain 1021) (Ensifer meliloti)).